Reading from the N-terminus, the 370-residue chain is Cytochrome b (370 aa).

4 consecutive transmembrane segments (helical) span residues 25-45 (FGSMLLACLTLQLLTGFFLAV), 69-90 (WMMQNLHAIGASMFFICIYIHI), 105-125 (WLSGTTLLIMLMATAFFGYVL), and 170-190 (FFALHFILPFGIISLSSLHIL). Residues His75 and His89 each contribute to the heme b site. Heme b-binding residues include His174 and His188. Residue His193 coordinates a ubiquinone. Transmembrane regions (helical) follow at residues 218 to 238 (YKDMLMLTIMTIMLLTIVSFF), 280 to 300 (LGGALALXMSIMILLTLPFTH), 312 to 332 (FMQLTFWTFTATFLVISWTAT), and 339 to 358 (FTTISQVAALMYFLFFISNP).

The protein belongs to the cytochrome b family. As to quaternary structure, the cytochrome bc1 complex contains 3 respiratory subunits (MT-CYB, CYC1 and UQCRFS1), 2 core proteins (UQCRC1 and UQCRC2) and probably 6 low-molecular weight proteins. Heme b is required as a cofactor.

It is found in the mitochondrion inner membrane. In terms of biological role, component of the ubiquinol-cytochrome c reductase complex (complex III or cytochrome b-c1 complex) that is part of the mitochondrial respiratory chain. The b-c1 complex mediates electron transfer from ubiquinol to cytochrome c. Contributes to the generation of a proton gradient across the mitochondrial membrane that is then used for ATP synthesis. This Chilabothrus exsul (Abaco Island boa) protein is Cytochrome b (MT-CYB).